A 1951-amino-acid polypeptide reads, in one-letter code: Sodium channel protein type 3 subunit alpha (1951 aa).

At 1–128 the chain is on the cytoplasmic side; sequence MAQALLVPPG…KIAIKILVHS (128 aa). Positions 28–60 are disordered; the sequence is RAAEEKAKKPKKEQDIDDENKPKPNSDLEAGKN. Residues 46 to 57 show a composition bias toward basic and acidic residues; that stretch reads ENKPKPNSDLEA. The I repeat unit spans residues 110–455; that stretch reads ILTPLNPVRK…QQMLEQLKKQ (346 aa). The helical transmembrane segment at 129–146 threads the bilayer; it reads LFSMLIMCTILTNCVFMT. Topologically, residues 147–152 are extracellular; the sequence is LSNPPD. A helical membrane pass occupies residues 153–174; sequence WTKNVEYTFTGIYTFESLIKIL. Residues 175–188 are Cytoplasmic-facing; that stretch reads ARGFCLEDFTFLRD. A helical transmembrane segment spans residues 189–206; that stretch reads PWNWLDFSVIVMAYVTEF. Residues 207–213 lie on the Extracellular side of the membrane; it reads VDLGNVS. Asparagine 211 is a glycosylation site (N-linked (GlcNAc...) asparagine). Residues 214–235 traverse the membrane as a helical segment; sequence ALRTFRVLRALKTISVIPGLKT. Topologically, residues 236 to 249 are cytoplasmic; it reads IVGALIQSVKKLSD. The helical transmembrane segment at 250–269 threads the bilayer; the sequence is VMILTVFCLSVFALIGLQLF. Topologically, residues 270–369 are extracellular; sequence MGNLRNKCSQ…NYGYTSFDTF (100 aa). Residues asparagine 290, asparagine 296, asparagine 302, asparagine 307, and asparagine 339 are each glycosylated (N-linked (GlcNAc...) asparagine). Residues 370-386 constitute an intramembrane region (pore-forming); it reads SWAFLSLFRLMTQDYWE. At 387-397 the chain is on the extracellular side; it reads NLYQLTLRAAG. A helical membrane pass occupies residues 398–424; it reads KTYMIFFVLVIFLGSFYLVNLILAVVA. At 425–712 the chain is on the cytoplasmic side; the sequence is MAYEEQNQAT…LVNLIVMDPF (288 aa). Residues serine 484, serine 485, and serine 486 each carry the phosphoserine modification. 2 disordered regions span residues 493–529 and 587–633; these read SKSAKEWRNRRKKRRQREHLEGNHRADGDRFPKSESE and VGSE…TEVR. The segment covering 500-509 has biased composition (basic residues); that stretch reads RNRRKKRRQR. Basic and acidic residues-rich tracts occupy residues 510-529 and 596-622; these read EHLEGNHRADGDRFPKSESE and DEHSTFEDSESRRDSLFVPHRPGERRN. An II repeat occupies 693-965; sequence CCDAWLKVKH…QIAVGRMQKG (273 aa). Residues 713-730 traverse the membrane as a helical segment; the sequence is VDLAITICIVLNTLFMAM. Over 731-738 the chain is Extracellular; it reads EHYPMTQQ. A helical transmembrane segment spans residues 739 to 763; that stretch reads FSSVLTVGNLVFTGIFTAEMVLKII. Topologically, residues 764–773 are cytoplasmic; the sequence is AMDPYYYFQE. Residues 774–793 traverse the membrane as a helical segment; that stretch reads GWNIFDGIIVSLSLMELGLA. Residues 794-797 are Extracellular-facing; it reads NVEG. A helical transmembrane segment spans residues 798-816; it reads LSVLRSFRLLRVFKLAKSW. Topologically, residues 817 to 834 are cytoplasmic; that stretch reads PTLNMLIKIIGNSVGALG. The chain crosses the membrane as a helical span at residues 835–855; the sequence is NLTLVLAIIVFIFAVVGMQLF. Topologically, residues 856–880 are extracellular; that stretch reads GKSYKECVCKINVDCKLPRWHMNDF. A disulfide bridge links cysteine 864 with cysteine 870. Positions 881–896 form an intramembrane region, pore-forming; the sequence is FHSFLIVFRVLCGEWI. The Extracellular segment spans residues 897 to 907; sequence ETMWDCMEVAG. A disulfide bridge links cysteine 902 with cysteine 911. The chain crosses the membrane as a helical span at residues 908–934; the sequence is QTMCLIVFMLVMVIGNLVVLNLFLALL. The Cytoplasmic segment spans residues 935-1156; that stretch reads LSSFSSDNLA…RKTCYSIVEH (222 aa). Positions 1068–1112 are disordered; that stretch reads TEEFSSESELEESKEKLNATSSSEGSTVDVAPPREGEQAEIEPEE. An III repeat occupies 1139–1450; the sequence is KGKIWWNLRK…KKYYNAMKKL (312 aa). A helical transmembrane segment spans residues 1157 to 1177; the sequence is NWFETFIVFMILLSSGALAFE. At 1178–1189 the chain is on the extracellular side; sequence DIYIEQRKTIKT. The helical transmembrane segment at 1190–1211 threads the bilayer; it reads MLEYADKVFTYIFILEMLLKWV. Topologically, residues 1212–1217 are cytoplasmic; that stretch reads AYGFQT. The helical transmembrane segment at 1218–1243 threads the bilayer; the sequence is YFTNAWCWLDFLIVDVSLVSLVANAL. At 1244 to 1252 the chain is on the extracellular side; sequence GYSELGAIK. The helical transmembrane segment at 1253-1271 threads the bilayer; the sequence is SLRTLRALRPLRALSRFEG. Topologically, residues 1272 to 1284 are cytoplasmic; the sequence is MRVVVNALVGAIP. Residues 1285 to 1307 traverse the membrane as a helical segment; it reads SIMNVLLVCLIFWLIFSIMGVNL. Residues 1308–1353 lie on the Extracellular side of the membrane; sequence FAGKFYHCVNTTTGNMFEIKEVNNFSDCQALGKQARWKNVKVNFDN. A disulfide bond links cysteine 1315 and cysteine 1335. Residues asparagine 1317 and asparagine 1331 are each glycosylated (N-linked (GlcNAc...) asparagine). The segment at residues 1354–1370 is an intramembrane region (pore-forming); that stretch reads VGAGYLALLQVATFKGW. Topologically, residues 1371-1393 are extracellular; that stretch reads MDIMYAAVDSRDVKLQPIYEENL. The chain crosses the membrane as a helical span at residues 1394–1419; sequence YMYLYFVIFIIFGSFFTLNLFIGVII. Residues 1420 to 1477 are Cytoplasmic-facing; sequence DNFNQQKKKFGGQDIFMTEEQKKYYNAMKKLGSKKPQKPIPRPANKFQGMVFDFVTRQ. Serine 1452 carries the phosphoserine; by PKC modification. Residues 1459 to 1757 form an IV repeat; sequence IPRPANKFQG…WEKFDPDATQ (299 aa). A helical transmembrane segment spans residues 1478–1496; the sequence is VFDISIMILICLNMVTMMV. Topologically, residues 1497–1504 are extracellular; the sequence is ETDDQSKY. Residues 1505 to 1528 form a helical membrane-spanning segment; that stretch reads MTLVLSRINLVFIVLFTGEFLLKL. Residues 1529–1538 lie on the Cytoplasmic side of the membrane; it reads ISLRYYYFTI. Residues 1539-1556 form a helical membrane-spanning segment; it reads GWNIFDFVVVILSIVGMF. The Extracellular portion of the chain corresponds to 1557-1568; the sequence is LAELIEKYFVSP. Residues 1569 to 1591 traverse the membrane as a helical segment; that stretch reads TLFRVIRLARIGRILRLIKGAKG. At 1592 to 1604 the chain is on the cytoplasmic side; the sequence is IRTLLFALMMSLP. A helical membrane pass occupies residues 1605 to 1628; it reads ALFNIGLLLFLVMFIYAIFGMSNF. Residues 1629 to 1650 are Extracellular-facing; that stretch reads AYVKKEAGIDDMFNFETFGNSM. The pore-forming intramembrane region spans 1651–1663; the sequence is ICLFQITTSAGWD. Over 1664–1695 the chain is Extracellular; sequence GLLAPILNSAPPDCDPDAIHPGSSVKGDCGNP. Residues 1696 to 1721 form a helical membrane-spanning segment; that stretch reads SVGIFFFVSYIIISFLVVVNMYIAVI. Topologically, residues 1722-1951 are cytoplasmic; that stretch reads LENFSVATEE…KGKEVRENQK (230 aa). One can recognise an IQ domain in the interval 1851 to 1880; the sequence is EEVSAAIIQRNYRCYLLKQRLKNISSKYDK. The tract at residues 1898-1951 is disordered; that stretch reads DKLNGNSTPEKTDGSSSTTSPPSYDSVTKPDKEKFEKDKPEKEIKGKEVRENQK. Basic and acidic residues predominate over residues 1925-1951; it reads TKPDKEKFEKDKPEKEIKGKEVRENQK.

Belongs to the sodium channel (TC 1.A.1.10) family. Nav1.3/SCN3A subfamily. In terms of assembly, heterooligomer of an alpha subunit, SCN3A, and 1 to 3 regulatory beta subunits including SCN1B and SCN2B; disulfide-linked with some beta subunits like SCN2B. Interacts with NEDD4L; could regulate expression of SCN3A at the plasma membrane through ubiquitination-regulated endocytosis. Interacts with the conotoxin GVIIJ. Interacts with the spider beta/delta-theraphotoxin-Pre1a. Interacts with the spider RTX-VII toxin (AC P0DL75). Post-translationally, may be ubiquitinated by NEDD4L; which would promote its endocytosis. Phosphorylation at Ser-1452 by PKC in a highly conserved cytoplasmic loop slows inactivation of the sodium channel and reduces peak sodium currents.

The protein resides in the cell membrane. Its subcellular location is the basal cell membrane. The catalysed reaction is Na(+)(in) = Na(+)(out). Functionally, pore-forming subunit of Nav1.3, a voltage-gated sodium (Nav) channel that directly mediates the depolarizing phase of action potentials in excitable membranes. Navs, also called VGSCs (voltage-gated sodium channels) or VDSCs (voltage-dependent sodium channels), operate by switching between closed and open conformations depending on the voltage difference across the membrane. In the open conformation they allow Na(+) ions to selectively pass through the pore, along their electrochemical gradient. The influx of Na+ ions provokes membrane depolarization, initiating the propagation of electrical signals throughout cells and tissues. In some secretory cell types, it also participates in cell excitability through membrane depolarization and regulates cells responsiveness to stimuli triggering secretion. For instance, it controls the release of serotonin/5-hydroxytryptamine by enterochromaffin cells and is required for both glucagon- and glucose-induced insulin secretion in pancreatic endocrine cells. This chain is Sodium channel protein type 3 subunit alpha, found in Rattus norvegicus (Rat).